The sequence spans 627 residues: Pescadillo homolog (627 aa).

Residues 321–414 (RLRTLFKGLK…QLLPTNKYFI (94 aa)) enclose the BRCT domain. 3 disordered regions span residues 436-471 (PEEK…AVDQ), 489-562 (YKKY…LQAR), and 596-627 (FEAG…KLGK). Serine 453 and serine 457 each carry phosphoserine. Composition is skewed to acidic residues over residues 453 to 471 (SDDD…AVDQ) and 498 to 521 (VNED…EELD). The span at 522 to 533 (EQAKRLKEEKQK) shows a compositional bias: basic and acidic residues. Residues 540–549 (KVHKVNKRQL) show a composition bias toward basic residues. Composition is skewed to basic and acidic residues over residues 550 to 559 (HKAEVDEHRL) and 596 to 605 (FEAGEKEARK). The span at 616 to 627 (AAAAAKASKLGK) shows a compositional bias: low complexity.

The protein belongs to the pescadillo family.

It localises to the nucleus. It is found in the nucleolus. The protein resides in the nucleoplasm. Functionally, required for maturation of ribosomal RNAs and formation of the large ribosomal subunit. The sequence is that of Pescadillo homolog from Drosophila ananassae (Fruit fly).